Here is a 170-residue protein sequence, read N- to C-terminus: Small ribosomal subunit protein uS9 (170 aa).

The disordered stretch occupies residues 1–47; sequence MAETTPEQPLEEIDIDSYTTESEVPVEGEYTSESMASAFGEPQPAAG.

Belongs to the universal ribosomal protein uS9 family.

The protein is Small ribosomal subunit protein uS9 (rpsI) of Streptomyces coelicolor (strain ATCC BAA-471 / A3(2) / M145).